A 255-amino-acid polypeptide reads, in one-letter code: MAKVVICGASGRMGQTLGRMVAESQDLELAGGIDLHPGSFFGAEIVAAKEIEALLASKKPDVLIDFTVAHAAVENVKSAARNNVALIVGTTGFTPEQREVMATAINGHVPAVISSNYSVGVNIFWQLVREAGRLLKDYDIEVIEAHHRNKKDAPSGTAKTILQILDEEAGERRKLYGREGMMERQNEIGVHVIRGGDIVGDHTVMFSKNFETIELSHRAYDRSVFASGALRAARWVVGKKPGIYGMNDVLGLEKT.

NAD(+) is bound by residues 8–13, 89–91, and 114–117; these read GASGRM, GTT, and SSNY. His-146 functions as the Proton donor/acceptor in the catalytic mechanism. A (S)-2,3,4,5-tetrahydrodipicolinate-binding site is contributed by His-147. Lys-150 (proton donor) is an active-site residue. 156–157 is a (S)-2,3,4,5-tetrahydrodipicolinate binding site; the sequence is GT.

The protein belongs to the DapB family.

The protein localises to the cytoplasm. It carries out the reaction (S)-2,3,4,5-tetrahydrodipicolinate + NAD(+) + H2O = (2S,4S)-4-hydroxy-2,3,4,5-tetrahydrodipicolinate + NADH + H(+). The enzyme catalyses (S)-2,3,4,5-tetrahydrodipicolinate + NADP(+) + H2O = (2S,4S)-4-hydroxy-2,3,4,5-tetrahydrodipicolinate + NADPH + H(+). It participates in amino-acid biosynthesis; L-lysine biosynthesis via DAP pathway; (S)-tetrahydrodipicolinate from L-aspartate: step 4/4. Its function is as follows. Catalyzes the conversion of 4-hydroxy-tetrahydrodipicolinate (HTPA) to tetrahydrodipicolinate. This is 4-hydroxy-tetrahydrodipicolinate reductase from Methanoregula boonei (strain DSM 21154 / JCM 14090 / 6A8).